The chain runs to 278 residues: MGQKINPHGFRLGITTDWKSRWYADKQYADYIKEDVAIRKLLATGLERAGIADVEIERTRDRVRVDIHTARPGIVIGRRGTEADRIRADLEKLTKKQVQLNILEVKNPESRAQLVAQGVAEQLSNRVAFRRAMRKAIQSAMRQPNVKGIRVQCSGRLGGAEMSRSEFYREGRVPLHTLRADIDYGLYEAKTTFGRIGVKVWIYKGDIVGGKRELAAAAPAGADRPRRERPSGTRPRRSGASGTTATSTDAGRAATEEAPATDAAATAPAAGQPETTES.

In terms of domain architecture, KH type-2 spans 38–106; it reads IRKLLATGLE…QVQLNILEVK (69 aa). Residues 215 to 278 form a disordered region; that stretch reads AAAAPAGADR…AAGQPETTES (64 aa). Positions 238 to 278 are enriched in low complexity; it reads SGASGTTATSTDAGRAATEEAPATDAAATAPAAGQPETTES.

Belongs to the universal ribosomal protein uS3 family. Part of the 30S ribosomal subunit. Forms a tight complex with proteins S10 and S14.

Its function is as follows. Binds the lower part of the 30S subunit head. Binds mRNA in the 70S ribosome, positioning it for translation. This is Small ribosomal subunit protein uS3 from Mycolicibacterium gilvum (strain PYR-GCK) (Mycobacterium gilvum (strain PYR-GCK)).